Reading from the N-terminus, the 192-residue chain is Small ribosomal subunit protein uS5 (192 aa).

The disordered stretch occupies residues 1–21; the sequence is MAAERERGGRERGGRDRDERD. The S5 DRBM domain maps to 24–87; it reads FVDKLVHINR…DSAKRNLTRV (64 aa).

This sequence belongs to the universal ribosomal protein uS5 family. Part of the 30S ribosomal subunit. Contacts proteins S4 and S8.

Functionally, with S4 and S12 plays an important role in translational accuracy. Its function is as follows. Located at the back of the 30S subunit body where it stabilizes the conformation of the head with respect to the body. The sequence is that of Small ribosomal subunit protein uS5 from Afipia carboxidovorans (strain ATCC 49405 / DSM 1227 / KCTC 32145 / OM5) (Oligotropha carboxidovorans).